A 72-amino-acid chain; its full sequence is Exodeoxyribonuclease 7 small subunit (72 aa).

It belongs to the XseB family. In terms of assembly, heterooligomer composed of large and small subunits.

It localises to the cytoplasm. The catalysed reaction is Exonucleolytic cleavage in either 5'- to 3'- or 3'- to 5'-direction to yield nucleoside 5'-phosphates.. In terms of biological role, bidirectionally degrades single-stranded DNA into large acid-insoluble oligonucleotides, which are then degraded further into small acid-soluble oligonucleotides. The polypeptide is Exodeoxyribonuclease 7 small subunit (Ruegeria pomeroyi (strain ATCC 700808 / DSM 15171 / DSS-3) (Silicibacter pomeroyi)).